We begin with the raw amino-acid sequence, 224 residues long: MKKTVIICIYIFLLLSGALVGLAKEETAQKSENQPVVIPDQAIRLRILANSDSDQDQQLKRHIRDAVNKEITTWVKDITSIEEARRVIRSKLPEIKAIAKETMEKEGANQSISVDFDKISFPTKLYGNMVYPAGEYEAILITLGNGDGANWWCVLFPPLCFLDFSNGEAVKEQEDKEASKKQTEKVLEDVTAKAEKAKKEENEEKEDGTEVKFFLVEWISDLFS.

The sequence is that of Stage II sporulation protein R (spoIIR) from Bacillus subtilis (strain 168).